Here is a 276-residue protein sequence, read N- to C-terminus: Ribosomal RNA small subunit methyltransferase A (276 aa).

H15, L17, G42, E64, D89, and N108 together coordinate S-adenosyl-L-methionine.

Belongs to the class I-like SAM-binding methyltransferase superfamily. rRNA adenine N(6)-methyltransferase family. RsmA subfamily.

Its subcellular location is the cytoplasm. The catalysed reaction is adenosine(1518)/adenosine(1519) in 16S rRNA + 4 S-adenosyl-L-methionine = N(6)-dimethyladenosine(1518)/N(6)-dimethyladenosine(1519) in 16S rRNA + 4 S-adenosyl-L-homocysteine + 4 H(+). Specifically dimethylates two adjacent adenosines (A1518 and A1519) in the loop of a conserved hairpin near the 3'-end of 16S rRNA in the 30S particle. May play a critical role in biogenesis of 30S subunits. This chain is Ribosomal RNA small subunit methyltransferase A, found in Prochlorococcus marinus (strain MIT 9515).